The sequence spans 460 residues: Exodeoxyribonuclease 7 large subunit (460 aa).

Belongs to the XseA family. In terms of assembly, heterooligomer composed of large and small subunits.

Its subcellular location is the cytoplasm. The enzyme catalyses Exonucleolytic cleavage in either 5'- to 3'- or 3'- to 5'-direction to yield nucleoside 5'-phosphates.. Bidirectionally degrades single-stranded DNA into large acid-insoluble oligonucleotides, which are then degraded further into small acid-soluble oligonucleotides. In Edwardsiella ictaluri (strain 93-146), this protein is Exodeoxyribonuclease 7 large subunit.